A 79-amino-acid chain; its full sequence is Pulmonary surfactant-associated protein B (79 aa).

The Saposin B-type domain maps to 4 to 79 (PLPFCWLCRT…VCGLVLRCSS (76 aa)). Intrachain disulfides connect Cys8–Cys77, Cys11–Cys71, and Cys35–Cys46.

Homodimer; disulfide-linked.

The protein resides in the secreted. Its subcellular location is the extracellular space. It is found in the surface film. Pulmonary surfactant-associated proteins promote alveolar stability by lowering the surface tension at the air-liquid interface in the peripheral air spaces. SP-B increases the collapse pressure of palmitic acid to nearly 70 millinewtons per meter. This Sus scrofa (Pig) protein is Pulmonary surfactant-associated protein B (SFTPB).